A 310-amino-acid polypeptide reads, in one-letter code: ADP-L-glycero-D-manno-heptose-6-epimerase (310 aa).

NADP(+) contacts are provided by residues 10 to 11 (FI), 31 to 32 (DN), K38, K53, 75 to 79 (EGACS), and N92. Y140 serves as the catalytic Proton acceptor. Residue K144 participates in NADP(+) binding. N169 contributes to the substrate binding site. Residues V170 and K178 each contribute to the NADP(+) site. K178 functions as the Proton acceptor in the catalytic mechanism. Residues S180, H187, 201–204 (FEGS), and R209 each bind substrate. K267 is subject to N6-acetyllysine. Y272 is a binding site for substrate.

It belongs to the NAD(P)-dependent epimerase/dehydratase family. HldD subfamily. In terms of assembly, homopentamer. It depends on NADP(+) as a cofactor.

The catalysed reaction is ADP-D-glycero-beta-D-manno-heptose = ADP-L-glycero-beta-D-manno-heptose. The protein operates within nucleotide-sugar biosynthesis; ADP-L-glycero-beta-D-manno-heptose biosynthesis; ADP-L-glycero-beta-D-manno-heptose from D-glycero-beta-D-manno-heptose 7-phosphate: step 4/4. Its function is as follows. Catalyzes the interconversion between ADP-D-glycero-beta-D-manno-heptose and ADP-L-glycero-beta-D-manno-heptose via an epimerization at carbon 6 of the heptose. The chain is ADP-L-glycero-D-manno-heptose-6-epimerase from Escherichia coli (strain ATCC 8739 / DSM 1576 / NBRC 3972 / NCIMB 8545 / WDCM 00012 / Crooks).